The sequence spans 338 residues: Ferredoxin--NADP reductase (338 aa).

FAD contacts are provided by D38, Q46, Y51, V91, F125, D291, and T331.

The protein belongs to the ferredoxin--NADP reductase type 2 family. As to quaternary structure, homodimer. FAD is required as a cofactor.

The catalysed reaction is 2 reduced [2Fe-2S]-[ferredoxin] + NADP(+) + H(+) = 2 oxidized [2Fe-2S]-[ferredoxin] + NADPH. The polypeptide is Ferredoxin--NADP reductase (Orientia tsutsugamushi (strain Boryong) (Rickettsia tsutsugamushi)).